Consider the following 248-residue polypeptide: Ubiquinone biosynthesis O-methyltransferase (248 aa).

S-adenosyl-L-methionine is bound by residues Arg-41, Gly-72, Asp-93, and Met-136.

It belongs to the methyltransferase superfamily. UbiG/COQ3 family.

The catalysed reaction is a 3-demethylubiquinol + S-adenosyl-L-methionine = a ubiquinol + S-adenosyl-L-homocysteine + H(+). The enzyme catalyses a 3-(all-trans-polyprenyl)benzene-1,2-diol + S-adenosyl-L-methionine = a 2-methoxy-6-(all-trans-polyprenyl)phenol + S-adenosyl-L-homocysteine + H(+). The protein operates within cofactor biosynthesis; ubiquinone biosynthesis. Its function is as follows. O-methyltransferase that catalyzes the 2 O-methylation steps in the ubiquinone biosynthetic pathway. In Brucella abortus (strain 2308), this protein is Ubiquinone biosynthesis O-methyltransferase.